The chain runs to 489 residues: Cytochrome P450 2C70 (489 aa).

The first 27 residues, 1 to 27 (MALFIFLGIWLSCLVFLFLWNQHHVRR), serve as a signal peptide directing secretion. Cys-434 serves as a coordination point for heme.

This sequence belongs to the cytochrome P450 family. It depends on heme as a cofactor.

Its subcellular location is the endoplasmic reticulum membrane. It localises to the microsome membrane. The enzyme catalyses chenodeoxycholate + reduced [NADPH--hemoprotein reductase] + O2 = alpha-muricholate + oxidized [NADPH--hemoprotein reductase] + H2O + H(+). The catalysed reaction is ursodeoxycholate + reduced [NADPH--hemoprotein reductase] + O2 = beta-muricholate + oxidized [NADPH--hemoprotein reductase] + H2O + H(+). Functionally, a cytochrome P450 monooxygenase involved in muricholic acid (MCA) synthesis. Hydroxylates at the 6-beta position two major bile acids, chenodeoxycholic acid (CDCA) and ursodeoxycholic acid (UDCA) to form alpha-MCA and beta-MCA, respectively. May regulate NR1H4/farnesoid X receptor signaling, as taurine-conjugated MCAs are antagonists of NR1H4. Mechanistically, uses molecular oxygen inserting one oxygen atom into a substrate, and reducing the second into a water molecule, with two electrons provided by NADPH via cytochrome P450 reductase (CPR; NADPH-ferrihemoprotein reductase). This is Cytochrome P450 2C70 from Rattus norvegicus (Rat).